The chain runs to 547 residues: Chaperonin GroEL (547 aa).

ATP contacts are provided by residues 30–33 (TLGP), Lys-51, 87–91 (DGTTT), Gly-415, 479–481 (NAA), and Asp-495. Residues 525-547 (PKEDKPDLGGGNPGGAGGMGGMM) form a disordered region. Gly residues predominate over residues 532 to 547 (LGGGNPGGAGGMGGMM).

The protein belongs to the chaperonin (HSP60) family. As to quaternary structure, forms a cylinder of 14 subunits composed of two heptameric rings stacked back-to-back. Interacts with the co-chaperonin GroES.

The protein resides in the cytoplasm. It carries out the reaction ATP + H2O + a folded polypeptide = ADP + phosphate + an unfolded polypeptide.. Functionally, together with its co-chaperonin GroES, plays an essential role in assisting protein folding. The GroEL-GroES system forms a nano-cage that allows encapsulation of the non-native substrate proteins and provides a physical environment optimized to promote and accelerate protein folding. This is Chaperonin GroEL from Blochmanniella floridana.